A 2203-amino-acid polypeptide reads, in one-letter code: Genome polyprotein (2203 aa).

Gly-2 carries N-myristoyl glycine; by host lipidation. At 2 to 1513 (GAQVSTQKTG…HVSRAFICLQ (1512 aa)) the chain is on the cytoplasmic side. The interval 567–583 (ELQNDVRQAVEGAIGRV) is amphipathic alpha-helix. Catalysis depends on for protease 2A activity residues His-890 and Asp-908. Cys-925 and Cys-927 together coordinate Zn(2+). The For protease 2A activity role is filled by Cys-979. Zn(2+) contacts are provided by Cys-985 and His-987. Positions 1119–1191 (SNGWLKKFTE…EQSAPSQSDQ (73 aa)) are membrane-binding. Positions 1119-1257 (SNGWLKKFTE…SPGAGKSVAT (139 aa)) are oligomerization. Residues 1140 to 1144 (AVKIQ) form an RNA-binding region. The region spanning 1223-1379 (EKKMSNYIQF…SMYSQNGKIN (157 aa)) is the SF3 helicase domain. Zn(2+) is bound by residues Cys-1387, Cys-1399, and Cys-1404. Residues 1387–1404 (CDEECCPVNFKRCCPLVC) form a C4-type; degenerate zinc finger. An RNA-binding region spans residues 1431–1438 (EYNHRHSV). The segment at 1442–1447 (LEALFQ) is oligomerization. The stretch at 1514–1529 (ALTTFVSVAGIIYIIY) is an intramembrane region. Topologically, residues 1530 to 2203 (KLFAGFQGAY…TLRRKWLDSF (674 aa)) are cytoplasmic. Residue Tyr-1539 is modified to O-(5'-phospho-RNA)-tyrosine. The Peptidase C3 domain occupies 1559 to 1737 (GPAFEFAVAM…FSAALLRHYF (179 aa)). Catalysis depends on for protease 3C activity residues His-1598, Glu-1629, and Cys-1705. One can recognise a RdRp catalytic domain in the interval 1968–2084 (GHLIAFDYSG…SYPWPIDASL (117 aa)). Residues Asp-1974 and Asp-2070 each coordinate Mg(2+).

Belongs to the picornaviruses polyprotein family. As to quaternary structure, interacts with capsid protein VP1 and capsid protein VP3 to form heterotrimeric protomers. Interacts with capsid protein VP0, and capsid protein VP3 to form heterotrimeric protomers. Five protomers subsequently associate to form pentamers which serve as building blocks for the capsid. Interacts with capsid protein VP2, capsid protein VP3 and capsid protein VP4 following cleavage of capsid protein VP0. In terms of assembly, interacts with capsid protein VP1 and capsid protein VP3 in the mature capsid. As to quaternary structure, interacts with capsid protein VP0 and capsid protein VP1 to form heterotrimeric protomers. Five protomers subsequently associate to form pentamers which serve as building blocks for the capsid. Interacts with capsid protein VP4 in the mature capsid. Interacts with protein 2C; this interaction may be important for virion morphogenesis. Interacts with capsid protein VP1 and capsid protein VP3. In terms of assembly, homodimer. As to quaternary structure, homohexamer; forms a hexameric ring structure with 6-fold symmetry characteristic of AAA+ ATPases. Interacts (via N-terminus) with host RTN3 (via reticulon domain); this interaction is important for viral replication. Interacts with capsid protein VP3; this interaction may be important for virion morphogenesis. Interacts with protein 3CD. In terms of assembly, homodimer. Interacts with host GBF1. Interacts (via GOLD domain) with host ACBD3 (via GOLD domain); this interaction allows the formation of a viral protein 3A/ACBD3 heterotetramer with a 2:2 stoichiometry, which will stimulate the recruitment of host PI4KB in order to synthesize PI4P at the viral RNA replication sites. As to quaternary structure, interacts with RNA-directed RNA polymerase. Interacts with protein 3AB and with RNA-directed RNA polymerase. In terms of assembly, interacts with Viral protein genome-linked and with protein 3CD. Mg(2+) is required as a cofactor. Post-translationally, specific enzymatic cleavages in vivo by the viral proteases yield processing intermediates and the mature proteins. In terms of processing, myristoylation is required for the formation of pentamers during virus assembly. Further assembly of 12 pentamers and a molecule of genomic RNA generates the provirion. During virion maturation, immature virions are rendered infectious following cleavage of VP0 into VP4 and VP2. This maturation seems to be an autocatalytic event triggered by the presence of RNA in the capsid and it is followed by a conformational change infectious virion. Post-translationally, myristoylation is required during RNA encapsidation and formation of the mature virus particle. In terms of processing, VPg is uridylylated by the polymerase into VPg-pUpU. This acts as a nucleotide-peptide primer for the genomic RNA replication.

The protein localises to the virion. The protein resides in the host cytoplasm. It localises to the host cytoplasmic vesicle membrane. It is found in the host nucleus. The enzyme catalyses a ribonucleoside 5'-triphosphate + H2O = a ribonucleoside 5'-diphosphate + phosphate + H(+). The catalysed reaction is Selective cleavage of Tyr-|-Gly bond in the picornavirus polyprotein.. It carries out the reaction RNA(n) + a ribonucleoside 5'-triphosphate = RNA(n+1) + diphosphate. It catalyses the reaction Selective cleavage of Gln-|-Gly bond in the poliovirus polyprotein. In other picornavirus reactions Glu may be substituted for Gln, and Ser or Thr for Gly.. With respect to regulation, replication or transcription is subject to high level of random mutations by the nucleotide analog ribavirin. Forms an icosahedral capsid of pseudo T=3 symmetry with capsid proteins VP2 and VP3. The capsid is 300 Angstroms in diameter, composed of 60 copies of each capsid protein and enclosing the viral positive strand RNA genome. Capsid protein VP1 mainly forms the vertices of the capsid. Capsid protein VP1 interacts with host cell receptor to provide virion attachment to target host cells. This attachment induces virion internalization. Tyrosine kinases are probably involved in the entry process. After binding to its receptor, the capsid undergoes conformational changes. Capsid protein VP1 N-terminus (that contains an amphipathic alpha-helix) and capsid protein VP4 are externalized. Together, they shape a pore in the host membrane through which viral genome is translocated to host cell cytoplasm. Functionally, forms an icosahedral capsid of pseudo T=3 symmetry with capsid proteins VP2 and VP3. The capsid is 300 Angstroms in diameter, composed of 60 copies of each capsid protein and enclosing the viral positive strand RNA genome. Its function is as follows. Lies on the inner surface of the capsid shell. After binding to the host receptor, the capsid undergoes conformational changes. Capsid protein VP4 is released, Capsid protein VP1 N-terminus is externalized, and together, they shape a pore in the host membrane through which the viral genome is translocated into the host cell cytoplasm. In terms of biological role, component of immature procapsids, which is cleaved into capsid proteins VP4 and VP2 after maturation. Allows the capsid to remain inactive before the maturation step. Cysteine protease that cleaves viral polyprotein and specific host proteins. It is responsible for the autocatalytic cleavage between the P1 and P2 regions, which is the first cleavage occurring in the polyprotein. Also cleaves the host translation initiation factor EIF4G1, in order to shut down the capped cellular mRNA translation. Inhibits the host nucleus-cytoplasm protein and RNA trafficking by cleaving host members of the nuclear pores. Counteracts stress granule formation probably by antagonizing its assembly or promoting its dissassembly. Functionally, plays an essential role in the virus replication cycle by acting as a viroporin. Creates a pore in the host endoplasmic reticulum and as a consequence releases Ca2+ in the cytoplasm of infected cell. In turn, high levels of cytoplasmic calcium may trigger membrane trafficking and transport of viral ER-associated proteins to viroplasms, sites of viral genome replication. Its function is as follows. Induces and associates with structural rearrangements of intracellular membranes. Displays RNA-binding, nucleotide binding and NTPase activities. May play a role in virion morphogenesis and viral RNA encapsidation by interacting with the capsid protein VP3. In terms of biological role, localizes the viral replication complex to the surface of membranous vesicles. Together with protein 3CD binds the Cis-Active RNA Element (CRE) which is involved in RNA synthesis initiation. Acts as a cofactor to stimulate the activity of 3D polymerase, maybe through a nucleid acid chaperone activity. Localizes the viral replication complex to the surface of membranous vesicles. It inhibits host cell endoplasmic reticulum-to-Golgi apparatus transport and causes the disassembly of the Golgi complex, possibly through GBF1 interaction. This would result in depletion of MHC, trail receptors and IFN receptors at the host cell surface. Plays an essential role in viral RNA replication by recruiting ACBD3 and PI4KB at the viral replication sites, thereby allowing the formation of the rearranged membranous structures where viral replication takes place. Functionally, acts as a primer for viral RNA replication and remains covalently bound to viral genomic RNA. VPg is uridylylated prior to priming replication into VPg-pUpU. The oriI viral genomic sequence may act as a template for this. The VPg-pUpU is then used as primer on the genomic RNA poly(A) by the RNA-dependent RNA polymerase to replicate the viral genome. During genome replication, the VPg-RNA linkage is removed by the host TDP2, thereby accelerating replication. During the late stage of the replication cycle, host TDP2 is excluded from sites of viral RNA synthesis and encapsidation, allowing for the generation of progeny virions. Its function is as follows. Involved in the viral replication complex and viral polypeptide maturation. It exhibits protease activity with a specificity and catalytic efficiency that is different from protease 3C. Protein 3CD lacks polymerase activity. Protein 3CD binds to the 5'UTR of the viral genome. In terms of biological role, replicates the viral genomic RNA on the surface of intracellular membranes. May form linear arrays of subunits that propagate along a strong head-to-tail interaction called interface-I. Covalently attaches UMP to a tyrosine of VPg, which is used to prime RNA synthesis. The positive stranded RNA genome is first replicated at virus induced membranous vesicles, creating a dsRNA genomic replication form. This dsRNA is then used as template to synthesize positive stranded RNA genomes. ss(+)RNA genomes are either translated, replicated or encapsidated. Major viral protease that mediates proteolytic processing of the polyprotein. Cleaves host EIF5B, contributing to host translation shutoff. Also cleaves host PABPC1, contributing to host translation shutoff. Cleaves host NLRP1, triggers host N-glycine-mediated degradation of the autoinhibitory NLRP1 N-terminal fragment. The sequence is that of Genome polyprotein from Echovirus 9 (strain Barty).